The chain runs to 249 residues: MLILLTNDDGIASPGLQALKDALKERHDVVTLAPVKDMSGTAHAISRGEDIKLTRIAEYEVAINGTPTDCVMAGLRMVLRRPPDLLVSGINMGANVAEDLSYSATAGAAWEGALSGIPSMAVSLCGSAAPWHFESAIKVTHMVIRQWLENPLPPGTFLNVNVPNVPEYELKNPKPTRQGLRFNWPPPPVTAAGNPAFWDPTIPTPREEEFQLATDEEALRDGFTSVTALHCLFRHPHATERLKAWSLFR.

4 residues coordinate a divalent metal cation: D8, D9, S39, and N91.

Belongs to the SurE nucleotidase family. It depends on a divalent metal cation as a cofactor.

It localises to the cytoplasm. It carries out the reaction a ribonucleoside 5'-phosphate + H2O = a ribonucleoside + phosphate. Its function is as follows. Nucleotidase that shows phosphatase activity on nucleoside 5'-monophosphates. In Magnetococcus marinus (strain ATCC BAA-1437 / JCM 17883 / MC-1), this protein is 5'-nucleotidase SurE.